We begin with the raw amino-acid sequence, 614 residues long: Leucine-rich repeat and immunoglobulin-like domain-containing nogo receptor-interacting protein 1 (614 aa).

A signal peptide spans 1 to 35; it reads MLAGGVRSMPSPLLACWQPILLLVLGSVLSGSATG. 2 cysteine pairs are disulfide-bonded: cysteine 36/cysteine 42 and cysteine 40/cysteine 51. Residues 36-65 enclose the LRRNT domain; that stretch reads CPPRCECSAQDRAVLCHRKRFVAVPEGIPT. Residues 36–555 lie on the Extracellular side of the membrane; sequence CPPRCECSAQ…FDIKTLIIAT (520 aa). LRR repeat units follow at residues 66 to 87, 90 to 111, 114 to 135, 138 to 159, 162 to 183, 186 to 207, 210 to 231, 258 to 279, 282 to 303, 306 to 327, and 330 to 351; these read ETRL…EFAS, HLEE…AFNN, NLRT…VFTG, NLTK…MFQD, NLKS…AFSG, SLEQ…ALSH, GLIV…SFKR, NLTS…AVRH, YLRF…MLHE, RLQE…AFRG, and YLRV…VFHS. Residue asparagine 138 is glycosylated (N-linked (GlcNAc...) asparagine). Asparagine 196 carries N-linked (GlcNAc...) asparagine glycosylation. N-linked (GlcNAc...) asparagine glycans are attached at residues asparagine 258, asparagine 268, and asparagine 287. The N-linked (GlcNAc...) asparagine glycan is linked to asparagine 335. Residues 363-417 enclose the LRRCT domain; that stretch reads NPLACDCRLLWVFRRRWRLNFNRQQPTCATPEFVQGKEFKDFPDVLLPNYFTCRR. 3 cysteine pairs are disulfide-bonded: cysteine 367/cysteine 390, cysteine 369/cysteine 415, and cysteine 440/cysteine 491. The Ig-like C2-type domain occupies 405–507; the sequence is PDVLLPNYFT…GNDSMPAHLH (103 aa). Residues asparagine 486, asparagine 499, asparagine 520, and asparagine 536 are each glycosylated (N-linked (GlcNAc...) asparagine). Residues 556 to 576 form a helical membrane-spanning segment; sequence TMGFISFLGVVLFCLVLLFLW. Over 577 to 614 the chain is Cytoplasmic; the sequence is SRGKGNTKHNIEIEYVPRKSDAGISSADAPRKFNMKMI. Serine 596 carries the phosphoserine modification.

Homotetramer. Forms a ternary complex with RTN4R/NGFR and RTN4R/TNFRSF19. Interacts with NGRF, RTN4R and MYT1L. Post-translationally, N-glycosylated. Contains predominantly high-mannose glycans.

It is found in the cell membrane. Its function is as follows. Functional component of the Nogo receptor signaling complex (RTN4R/NGFR) in RhoA activation responsible for some inhibition of axonal regeneration by myelin-associated factors. Is also an important negative regulator of oligodentrocyte differentiation and axonal myelination. Acts in conjunction with RTN4 and RTN4R in regulating neuronal precursor cell motility during cortical development. This is Leucine-rich repeat and immunoglobulin-like domain-containing nogo receptor-interacting protein 1 (LINGO1) from Pongo abelii (Sumatran orangutan).